Reading from the N-terminus, the 164-residue chain is HTH-type transcriptional regulator IscR (164 aa).

Positions 2 to 131 (RLTSKGRYAV…NNITLDELVN (130 aa)) constitute an HTH rrf2-type domain. The segment at residues 28 to 51 (LADISERQGISLSYLEQLFSRLRK) is a DNA-binding region (H-T-H motif). [2Fe-2S] cluster contacts are provided by Cys-92, Cys-98, and Cys-104.

[2Fe-2S] cluster serves as cofactor.

In terms of biological role, regulates the transcription of several operons and genes involved in the biogenesis of Fe-S clusters and Fe-S-containing proteins. This chain is HTH-type transcriptional regulator IscR, found in Pectobacterium atrosepticum (strain SCRI 1043 / ATCC BAA-672) (Erwinia carotovora subsp. atroseptica).